A 673-amino-acid polypeptide reads, in one-letter code: UvrABC system protein B (673 aa).

A Helicase ATP-binding domain is found at 24 to 182 (EGVERNDPAQ…YSFVEILYNR (159 aa)). 37–44 (GVTGSGKT) lines the ATP pocket. Positions 90–113 (YYDYYQPEAFMPTSGLYIEKDLAI) match the Beta-hairpin motif. The Helicase C-terminal domain maps to 429–591 (QIDDLLDEIQ…ITPITVNKSK (163 aa)). One can recognise a UVR domain in the interval 634 to 669 (TKMIDRAKKDMDKAAKDLDFVEAARYRDEMFALQKI).

This sequence belongs to the UvrB family. Forms a heterotetramer with UvrA during the search for lesions. Interacts with UvrC in an incision complex.

It is found in the cytoplasm. Its function is as follows. The UvrABC repair system catalyzes the recognition and processing of DNA lesions. A damage recognition complex composed of 2 UvrA and 2 UvrB subunits scans DNA for abnormalities. Upon binding of the UvrA(2)B(2) complex to a putative damaged site, the DNA wraps around one UvrB monomer. DNA wrap is dependent on ATP binding by UvrB and probably causes local melting of the DNA helix, facilitating insertion of UvrB beta-hairpin between the DNA strands. Then UvrB probes one DNA strand for the presence of a lesion. If a lesion is found the UvrA subunits dissociate and the UvrB-DNA preincision complex is formed. This complex is subsequently bound by UvrC and the second UvrB is released. If no lesion is found, the DNA wraps around the other UvrB subunit that will check the other stand for damage. In Cytophaga hutchinsonii (strain ATCC 33406 / DSM 1761 / CIP 103989 / NBRC 15051 / NCIMB 9469 / D465), this protein is UvrABC system protein B.